A 785-amino-acid chain; its full sequence is MSWVMVSPELVVAAAADLAGIGSAISSANAAAAVNTTGLLTAGADEVSTAIAALFGAQGQAYQAASAQAAAFYAQFVQALSAGGGAYAAAEAAAVSPLLAPINAQFVAATGRPLIGNGANGAPGTGANGGPGGWLIGNGGAGGSGAPGAGAGGNGGAGGLFGSGGAGGASTDVAGGAGGAGGAGGNASMLFGAAGVGGVGGFSNGGATGGAGGAGGAGGLFGAGGEGGSGGSGNLTGGAGGAGGNAGTLATGDGGAGGTGGASRSGGFGGAGGAGGDAGMFFGSGGSGGAGGISRSVGDGAAGGAGGAPGLIGNGGNGGNGGASTGGGDGGPGGAGGIGVLIGNGGNGGXGGTGATLGKAGIGGTGGVLLGLDGFTPPASTSPLHTLQQDVINMVNDPFQTLTGRPLIGNGANGTPGTGADGGAGGWLFGNGGNGGQGTIGGVNGGAGGAGGAGGILFGTGGTGGSGGPGATGLGGIGGAGGAALLFGSGGAGGSGGAGAVGGNGGAGGNAGALLGAAGAGGAGGAGAVGGNGGAGGNGGLFANGGAGGPGGFGSPAGAGGIGGAGGNGGLFGAGGAGGNGGLFGAGGTGGAGSHSTAAGVSGGAGGAGGDAGLLSLGASGGAGGSGGSSLTAAGVVGGIGGAGGLLFGSGGAGGSGGFSNSGNGGAGGAGGDAGLLVGSGGAGGAGASATGAATGGDGGAGGKSGAFGLGGDGGAGGATGLSGAFHIGGKGGVGGSAVLIGNGGNGGNGGNSGNAGKSGGAPGPSGAGGAGGLLLGENGLNGLM.

The region spanning 1–93 (MSWVMVSPEL…GGAYAAAEAA (93 aa)) is the PE domain.

It belongs to the mycobacterial PE family. PGRS subfamily.

This is an uncharacterized protein from Mycobacterium tuberculosis (strain CDC 1551 / Oshkosh).